The sequence spans 364 residues: Methylthioribose-1-phosphate isomerase (364 aa).

The active-site Proton donor is Asp-254.

The protein belongs to the eIF-2B alpha/beta/delta subunits family. MtnA subfamily.

It localises to the cytoplasm. The protein localises to the nucleus. It catalyses the reaction 5-(methylsulfanyl)-alpha-D-ribose 1-phosphate = 5-(methylsulfanyl)-D-ribulose 1-phosphate. The protein operates within amino-acid biosynthesis; L-methionine biosynthesis via salvage pathway; L-methionine from S-methyl-5-thio-alpha-D-ribose 1-phosphate: step 1/6. Functionally, catalyzes the interconversion of methylthioribose-1-phosphate (MTR-1-P) into methylthioribulose-1-phosphate (MTRu-1-P). This Drosophila erecta (Fruit fly) protein is Methylthioribose-1-phosphate isomerase.